The sequence spans 259 residues: uncharacterized protein (259 aa).

Residues 1–159 enclose the FAD-binding PCMH-type domain; sequence MIEQFFRPDS…TEIIIKDPYR (159 aa).

This is an uncharacterized protein from Escherichia coli O157:H7.